A 692-amino-acid polypeptide reads, in one-letter code: Acyl-coenzyme A oxidase 2, peroxisomal (692 aa).

Residues 1–49 constitute a peroxisome transit peptide; the sequence is MESRREKNPMTEEESDGLIAARRIQRLSLHLSPSLTPSPSLPLVQTETC. Residues Thr-186, Ser-192, Gly-225, Arg-365, Gln-384, Gly-452, and Thr-473 each contribute to the FAD site. Catalysis depends on Glu-475, which acts as the Proton acceptor. Asp-477 serves as a coordination point for FAD.

Belongs to the acyl-CoA oxidase family. As to quaternary structure, homodimer. The cofactor is FAD. Expressed mainly in flowers and young seedlings. Lower expression in roots, leaves and bracts.

Its subcellular location is the peroxisome. The enzyme catalyses a 2,3-saturated acyl-CoA + O2 = a (2E)-enoyl-CoA + H2O2. In terms of biological role, catalyzes the desaturation of long-chain acyl-CoAs to 2-trans-enoyl-CoAs. Active on substrates longer than C14 and mostly with C18-CoA. Activity on long-chain mono-unsaturated substrates is double than with the corresponding saturated substrates. The sequence is that of Acyl-coenzyme A oxidase 2, peroxisomal from Arabidopsis thaliana (Mouse-ear cress).